An 861-amino-acid polypeptide reads, in one-letter code: Leucine--tRNA ligase (861 aa).

A 'HIGH' region motif is present at residues 42-52 (PYPSGKLHMGH). Positions 620-624 (KMSKS) match the 'KMSKS' region motif. K623 contacts ATP.

It belongs to the class-I aminoacyl-tRNA synthetase family.

The protein resides in the cytoplasm. It carries out the reaction tRNA(Leu) + L-leucine + ATP = L-leucyl-tRNA(Leu) + AMP + diphosphate. This Buchnera aphidicola subsp. Schizaphis graminum (strain Sg) protein is Leucine--tRNA ligase.